A 203-amino-acid chain; its full sequence is MAWSITNKADTSSFTKMAEIRAHLKNSAENKDKNEDIFPEDVIIPSTKPKTKRATTPRKPAATKRSTKKEEVEEEVVIEEYHQTTEKNSPSPGVSDIVESVAAVELDDSDGDDEPMVQVEAGKVNHSARSDLSDLKVATDNIVKDLKKIITRISAVSTVLEDVQAAGISRQFTSMTKAITTLSDLVTEGKSKVVRKKVKTCKK.

Residues 25 to 36 (KNSAENKDKNED) are compositionally biased toward basic and acidic residues. The tract at residues 25 to 100 (KNSAENKDKN…SPGVSDIVES (76 aa)) is disordered. Residues 49 to 67 (PKTKRATTPRKPAATKRST) are compositionally biased toward basic residues. 2 positions are modified to phosphothreonine: threonine 84 and threonine 85.

Belongs to the orthopoxvirus OPG110 family. In terms of assembly, interacts with the DNA polymerase processivity factor A20. Interacts with B1R kinase. Interacts with the late transcription factors VLTF-1 and VLTF-3. Interacts with the late transcription elongation factor G2. Interacts with itself. Might be part of a transcription complex composed at least of G2, A18, and H5. Phosphorylated at multiple sites. Phosphorylation is necessary for cleavage activity. Phosphorylated by the viral B1R and F10 kinases.

It is found in the virion. The protein resides in the host cytoplasm. Involved in the co-transcriptional or post-transcriptional endoribonucleolytic cleavage that generates sequence-homogeneous 3' ends during late transcription. Involved in postreplicative transcription elongation on intermediate and late genes. Also involved in DNA replication and in multiple steps of virion morphogenesis. Required both for inclusion of virosoplasm into crescents as well as for maturation of immature virions (IV) into mature virions (MV). This Bos taurus (Bovine) protein is Late transcription elongation factor OPG110 (OPG110).